We begin with the raw amino-acid sequence, 465 residues long: MSKKYTQQQYEKYLAQPANNTFGLSPQQVADWFMGQAGARPVINSYGVNASNLVSTYIPKMQEYGVSYTLFLMYTVFEGGGAGNWINHYMYDTGSNGLECLEHDLQYIHGVWETYFPPALSAPECYPATEDNAGALDRFYQSLPGRTWGDVMIPSTMAGNAWVWAYNYCVNNQGAAPLVYFGNPYDSQIDSLLAMGADPFTGGSITGDGKNPSVGTGNATVSASSEANREKLKKALTDLFNNNLEHLSGEFYGNQVLNAMKYGTILKCDLTDDGLNAILQLIADVNLQTNPNPDKPTVQSPGQNDLGSGSDRVAANLANAQAQVGKYIGDGQCYAWVGWWSARVCGYSISYSTGDPMLPLIGDGMNAHSIHLGWDWSIANTGIVNYPVGTVGRKEDLRVGAIWCATAFSGAPFYTGQYGHTGIIESWSDTTVTVLEQNILGSPVIRSTYDLNTFLSTLTGLITFK.

Positions 2–205 are glycosidase activity; sequence SKKYTQQQYE…GADPFTGGSI (204 aa). Disordered stretches follow at residues 204–226 and 289–309; these read SITG…ASSE and TNPN…LGSG. Polar residues-rich tracts occupy residues 213–226 and 289–307; these read SVGT…ASSE and TNPN…NDLG. The 158-residue stretch at 308–465 folds into the Peptidase C51 domain; the sequence is SGSDRVAANL…STLTGLITFK (158 aa). Active-site for amidase activity residues include Cys-333 and His-420.

Part of the PlyC holoenzyme, which is composed of 1 PlyCA and 8 PlyCB assembled as a ring.

The enzyme catalyses Hydrolyzes the link between N-acetylmuramoyl residues and L-amino acid residues in certain cell-wall glycopeptides.. Component of the endolysin PlyC that degrades the host peptidoglycans and participates with the holin protein in the sequential events which lead to the programmed host cell lysis releasing the mature viral particles. Once the holin has permeabilized the host cell membrane, the endolysin can reach the periplasm and breaking down the peptidoglycan layer. When associated with the small subunit PlyCB, the large subunit PlyCA displays 2 catalytic activities, amidase and glycosyl hydrolase. Cleaves the amide bond between N-acetyl muramic acid and L-alanine in the host peptidoglycan. PlyC is an extremely potent endolysin. The polypeptide is Endolysin PlyC, large catalytic subunit (orf11) (Streptococcus phage C1).